Reading from the N-terminus, the 520-residue chain is Probable bifunctional tRNA threonylcarbamoyladenosine biosynthesis protein (520 aa).

Positions Met-1–Trp-318 are kae1. Residues His-105, His-109, and Tyr-126 each contribute to the Fe cation site. L-threonylcarbamoyladenylate contacts are provided by residues Tyr-126–Ala-130, Asp-158, Gly-171, Glu-175, and Asn-251. Asp-279 is a binding site for Fe cation. In terms of domain architecture, Protein kinase spans Arg-327 to Leu-520. ATP contacts are provided by residues Ser-333–Val-341 and Lys-350. The active-site Proton acceptor; for kinase activity is the Asp-437.

The protein in the N-terminal section; belongs to the KAE1 / TsaD family. In the C-terminal section; belongs to the protein kinase superfamily. Tyr protein kinase family. BUD32 subfamily. As to quaternary structure, component of the KEOPS complex that consists of Kae1, Bud32, Cgi121 and Pcc1; the whole complex dimerizes. It depends on Fe(2+) as a cofactor.

The protein localises to the cytoplasm. It catalyses the reaction L-seryl-[protein] + ATP = O-phospho-L-seryl-[protein] + ADP + H(+). It carries out the reaction L-threonyl-[protein] + ATP = O-phospho-L-threonyl-[protein] + ADP + H(+). The catalysed reaction is L-threonylcarbamoyladenylate + adenosine(37) in tRNA = N(6)-L-threonylcarbamoyladenosine(37) in tRNA + AMP + H(+). Functionally, required for the formation of a threonylcarbamoyl group on adenosine at position 37 (t(6)A37) in tRNAs that read codons beginning with adenine. Is a component of the KEOPS complex that is probably involved in the transfer of the threonylcarbamoyl moiety of threonylcarbamoyl-AMP (TC-AMP) to the N6 group of A37. The Kae1 domain likely plays a direct catalytic role in this reaction. The Bud32 domain probably displays kinase activity that regulates Kae1 function. The chain is Probable bifunctional tRNA threonylcarbamoyladenosine biosynthesis protein from Methanospirillum hungatei JF-1 (strain ATCC 27890 / DSM 864 / NBRC 100397 / JF-1).